Consider the following 182-residue polypeptide: Large ribosomal subunit protein uL6 (182 aa).

This sequence belongs to the universal ribosomal protein uL6 family. As to quaternary structure, part of the 50S ribosomal subunit.

Its function is as follows. This protein binds to the 23S rRNA, and is important in its secondary structure. It is located near the subunit interface in the base of the L7/L12 stalk, and near the tRNA binding site of the peptidyltransferase center. The chain is Large ribosomal subunit protein uL6 from Pelotomaculum thermopropionicum (strain DSM 13744 / JCM 10971 / SI).